Reading from the N-terminus, the 118-residue chain is RNA guanine-N7 methyltransferase activating subunit (118 aa).

The residue at position 2 (Thr-2) is an N-acetylthreonine. The tract at residues 2-55 (TDTAEAVPNFEEMFASRFTENDKEYQEYLKRPPESPPIVEEWNSRAGGNQRNRG) is interaction with RNMT. The segment at 30-118 (LKRPPESPPI…YNQRPPYGYY (89 aa)) is disordered. Ser-36 bears the Phosphoserine mark. The RNMT-activating domain motif lies at 36–42 (SPPIVEE). The span at 45–56 (SRAGGNQRNRGN) shows a compositional bias: low complexity. Residues 56 to 118 (NRLQDNRQFR…YNQRPPYGYY (63 aa)) form an RNA-binding region. The span at 57–70 (RLQDNRQFRGRDNR) shows a compositional bias: basic and acidic residues. Over residues 76 to 93 (DNRSNQWHGRSWGNNYPQ) the composition is skewed to polar residues. The residue at position 85 (Arg-85) is an Omega-N-methylarginine. Residue Ser-86 is modified to Phosphoserine. Low complexity predominate over residues 98–109 (PYYPQQYGHYGY).

This sequence belongs to the RAM family. In terms of assembly, interacts with RNMT; this interaction enhances mRNA binding and cap methyltransferase activity.

It is found in the nucleus. In terms of biological role, regulatory subunit of the mRNA-capping methyltransferase RNMT:RAMAC complex that methylates the N7 position of the added guanosine to the 5'-cap structure of mRNAs. Promotes the recruitment of the methyl donor, S-adenosyl-L-methionine, to RNMT. Regulates RNMT expression by a post-transcriptional stabilizing mechanism. Binds RNA. The sequence is that of RNA guanine-N7 methyltransferase activating subunit (RAMAC) from Pongo abelii (Sumatran orangutan).